Reading from the N-terminus, the 67-residue chain is Toxin Bl-1 (67 aa).

The region spanning 2–66 (RDGYISQPEN…GIIVDGIKCH (65 aa)) is the LCN-type CS-alpha/beta domain. 4 disulfide bridges follow: cysteine 12/cysteine 65, cysteine 16/cysteine 37, cysteine 23/cysteine 47, and cysteine 27/cysteine 49. Threonine 67 is subject to Threonine amide.

It belongs to the long (4 C-C) scorpion toxin superfamily. Sodium channel inhibitor family. Alpha subfamily. In terms of tissue distribution, expressed by the venom gland.

The protein localises to the secreted. Its function is as follows. Alpha toxins bind voltage-independently at site-3 of sodium channels (Nav) and inhibit the inactivation of the activated channels, thereby blocking neuronal transmission. Is highly toxic to insects (tested on the crickets A.domesticus). This peptide may also be toxic to mammals, since it is similar to alpha-like toxins that are active on both insect and mammalian sodium channels. The chain is Toxin Bl-1 from Buthacus leptochelys (Egyptian fat-tailed scorpion).